A 134-amino-acid polypeptide reads, in one-letter code: Flagellar basal-body rod protein FlgC (134 aa).

Belongs to the flagella basal body rod proteins family. As to quaternary structure, the basal body constitutes a major portion of the flagellar organelle and consists of four rings (L,P,S, and M) mounted on a central rod. The rod consists of about 26 subunits of FlgG in the distal portion, and FlgB, FlgC and FlgF are thought to build up the proximal portion of the rod with about 6 subunits each.

It localises to the bacterial flagellum basal body. In Aquifex aeolicus (strain VF5), this protein is Flagellar basal-body rod protein FlgC (flgC).